The sequence spans 100 residues: uncharacterized protein (100 aa).

3 helical membrane passes run 11-33, 45-64, and 68-90; these read VWSI…SVLM, WMLA…SLVY, and WEGA…GYLI.

Its subcellular location is the cell membrane. This is an uncharacterized protein from Bacillus subtilis (strain 168).